Reading from the N-terminus, the 357-residue chain is Glycerol-3-phosphate dehydrogenase [NAD(P)+] (357 aa).

Positions 30, 31, 51, and 124 each coordinate NADPH. 2 residues coordinate sn-glycerol 3-phosphate: lysine 124 and glycine 152. Alanine 156 is a binding site for NADPH. Sn-glycerol 3-phosphate-binding residues include lysine 207, aspartate 260, serine 270, arginine 271, and asparagine 272. Residue lysine 207 is the Proton acceptor of the active site. Arginine 271 provides a ligand contact to NADPH. Glutamate 297 is an NADPH binding site.

It belongs to the NAD-dependent glycerol-3-phosphate dehydrogenase family.

The protein resides in the cytoplasm. The enzyme catalyses sn-glycerol 3-phosphate + NAD(+) = dihydroxyacetone phosphate + NADH + H(+). The catalysed reaction is sn-glycerol 3-phosphate + NADP(+) = dihydroxyacetone phosphate + NADPH + H(+). It functions in the pathway membrane lipid metabolism; glycerophospholipid metabolism. Functionally, catalyzes the reduction of the glycolytic intermediate dihydroxyacetone phosphate (DHAP) to sn-glycerol 3-phosphate (G3P), the key precursor for phospholipid synthesis. In Acinetobacter baumannii (strain AB307-0294), this protein is Glycerol-3-phosphate dehydrogenase [NAD(P)+].